Reading from the N-terminus, the 90-residue chain is Barrier-to-autointegration factor B (90 aa).

It belongs to the BAF family. In terms of assembly, homodimer. Interacts with nemp1a and nemp1b.

Its subcellular location is the nucleus. The protein resides in the chromosome. The protein localises to the nucleus envelope. It is found in the cytoplasm. In terms of biological role, non-specific DNA-binding protein that plays key roles in mitotic nuclear reassembly, chromatin organization, DNA damage response, gene expression and intrinsic immunity against foreign DNA. Contains two non-specific double-stranded DNA (dsDNA)-binding sites which promote DNA cross-bridging. Plays a key role in nuclear membrane reformation at the end of mitosis by driving formation of a single nucleus in a spindle-independent manner. Transiently cross-bridges anaphase chromosomes via its ability to bridge distant DNA sites, leading to the formation of a dense chromatin network at the chromosome ensemble surface that limits membranes to the surface. Also acts as a negative regulator of innate immune activation by restricting CGAS activity toward self-DNA upon acute loss of nuclear membrane integrity. Outcompetes CGAS for DNA-binding, thereby preventing CGAS activation and subsequent damaging autoinflammatory responses. Also involved in DNA damage response; acts by inhibiting the ADP-ribosyltransferase activity of PARP1. Involved in the recognition of exogenous dsDNA in the cytosol: associates with exogenous dsDNA immediately after its appearance in the cytosol at endosome breakdown and is required to avoid autophagy. In Xenopus laevis (African clawed frog), this protein is Barrier-to-autointegration factor B (banf1-b).